We begin with the raw amino-acid sequence, 147 residues long: DNA-directed RNA polymerase subunit 6 homolog (147 aa).

This sequence belongs to the archaeal RpoK/eukaryotic RPB6 RNA polymerase subunit family. Part of the viral DNA-directed RNA polymerase that consists of 8 polII-like subunits (RPB1, RPB2, RPB3, RPB5, RPB6, RPB7, RPB9, RPB10), a capping enzyme and a termination factor.

The protein localises to the host cytoplasm. The protein resides in the virion. Its function is as follows. Component of the DNA-directed RNA polymerase (RNAP) that catalyzes the transcription in the cytoplasm of viral DNA into RNA using the four ribonucleoside triphosphates as substrates. In Ornithodoros (relapsing fever ticks), this protein is DNA-directed RNA polymerase subunit 6 homolog.